The chain runs to 232 residues: 2-C-methyl-D-erythritol 4-phosphate cytidylyltransferase (232 aa).

The protein belongs to the IspD/TarI cytidylyltransferase family. IspD subfamily.

The enzyme catalyses 2-C-methyl-D-erythritol 4-phosphate + CTP + H(+) = 4-CDP-2-C-methyl-D-erythritol + diphosphate. Its pathway is isoprenoid biosynthesis; isopentenyl diphosphate biosynthesis via DXP pathway; isopentenyl diphosphate from 1-deoxy-D-xylulose 5-phosphate: step 2/6. Catalyzes the formation of 4-diphosphocytidyl-2-C-methyl-D-erythritol from CTP and 2-C-methyl-D-erythritol 4-phosphate (MEP). The sequence is that of 2-C-methyl-D-erythritol 4-phosphate cytidylyltransferase from Bacillus velezensis (strain DSM 23117 / BGSC 10A6 / LMG 26770 / FZB42) (Bacillus amyloliquefaciens subsp. plantarum).